A 138-amino-acid chain; its full sequence is Basic phospholipase A2 DsM-b1/DsM-b1' (138 aa).

Positions 1-16 (MRTLWIVAMCLIGVEG) are cleaved as a signal peptide. Disulfide bonds link Cys-42–Cys-131, Cys-44–Cys-60, Cys-59–Cys-111, Cys-65–Cys-138, Cys-66–Cys-104, Cys-73–Cys-97, and Cys-91–Cys-102. Positions 43, 45, and 47 each coordinate Ca(2+). The active site involves His-63. A Ca(2+)-binding site is contributed by Asp-64. Asp-105 is an active-site residue.

Ca(2+) serves as cofactor. As to expression, expressed by the venom gland.

It localises to the secreted. The enzyme catalyses a 1,2-diacyl-sn-glycero-3-phosphocholine + H2O = a 1-acyl-sn-glycero-3-phosphocholine + a fatty acid + H(+). Exhibits high hydrolytic activities and shows strong preference for the anionic micelles (dPPC with deoxycholate) to the zwitterionic micelles (dPPC with Triton X-100). PLA2 catalyzes the calcium-dependent hydrolysis of the 2-acyl groups in 3-sn-phosphoglycerides. This is Basic phospholipase A2 DsM-b1/DsM-b1' from Daboia siamensis (Eastern Russel's viper).